The sequence spans 545 residues: Phenylalanine--tRNA ligase beta subunit (545 aa).

In terms of domain architecture, B5 spans 268–343; the sequence is FLHKIQNVRE…MSIGYNNLEP (76 aa). Mg(2+) is bound by residues D321, D327, E330, and D331.

The protein belongs to the phenylalanyl-tRNA synthetase beta subunit family. Type 2 subfamily. In terms of assembly, tetramer of two alpha and two beta subunits. Mg(2+) is required as a cofactor.

The protein resides in the cytoplasm. It carries out the reaction tRNA(Phe) + L-phenylalanine + ATP = L-phenylalanyl-tRNA(Phe) + AMP + diphosphate + H(+). The polypeptide is Phenylalanine--tRNA ligase beta subunit (Saccharolobus islandicus (strain M.16.27) (Sulfolobus islandicus)).